We begin with the raw amino-acid sequence, 559 residues long: CTP synthase (559 aa).

The segment at 1-270 is amidoligase domain; sequence MTKFVFVTGG…DGLICDKLRI (270 aa). Residue S13 coordinates CTP. A UTP-binding site is contributed by S13. ATP-binding positions include 14–19 and D71; that span reads SLGKGI. Mg(2+) is bound by residues D71 and E144. CTP is bound by residues 151-153, 191-196, and K227; these read DIE and KTKPTQ. Residues 191 to 196 and K227 contribute to the UTP site; that span reads KTKPTQ. One can recognise a Glutamine amidotransferase type-1 domain in the interval 295–547; that stretch reads SIAMVGKYVD…IKAALDHKAR (253 aa). An L-glutamine-binding site is contributed by G356. The Nucleophile; for glutamine hydrolysis role is filled by C383. Residues 384–387, E407, and R473 each bind L-glutamine; that span reads LGMQ. Residues H520 and E522 contribute to the active site.

This sequence belongs to the CTP synthase family. In terms of assembly, homotetramer.

It carries out the reaction UTP + L-glutamine + ATP + H2O = CTP + L-glutamate + ADP + phosphate + 2 H(+). The catalysed reaction is L-glutamine + H2O = L-glutamate + NH4(+). It catalyses the reaction UTP + NH4(+) + ATP = CTP + ADP + phosphate + 2 H(+). Its pathway is pyrimidine metabolism; CTP biosynthesis via de novo pathway; CTP from UDP: step 2/2. Allosterically activated by GTP, when glutamine is the substrate; GTP has no effect on the reaction when ammonia is the substrate. The allosteric effector GTP functions by stabilizing the protein conformation that binds the tetrahedral intermediate(s) formed during glutamine hydrolysis. Inhibited by the product CTP, via allosteric rather than competitive inhibition. Functionally, catalyzes the ATP-dependent amination of UTP to CTP with either L-glutamine or ammonia as the source of nitrogen. Regulates intracellular CTP levels through interactions with the four ribonucleotide triphosphates. This chain is CTP synthase, found in Variovorax paradoxus (strain S110).